The sequence spans 215 residues: Autophagy-related protein 101 (215 aa).

The interval 124-147 (PVGKSHHSKLVMDPGEASEERSSR) is disordered.

The protein belongs to the ATG101 family. Interacts with ATG11 and ATG13A.

It localises to the cytoplasmic vesicle. The protein resides in the autophagosome. Its function is as follows. Accessory protein involved in autophagy. Acts as a scaffold protein of the ATG1-ATG13 complex for faithful delivery of autophagic vesicles to the vacuole. Required for selective mitophagy. The chain is Autophagy-related protein 101 from Arabidopsis thaliana (Mouse-ear cress).